A 128-amino-acid chain; its full sequence is Probable 4-amino-4-deoxy-L-arabinose-phosphoundecaprenol flippase subunit ArnF (128 aa).

The helical transmembrane segment at Met-1–Gly-21 threads the bilayer. Over Tyr-22–Asp-35 the chain is Periplasmic. The helical transmembrane segment at Phe-36–Gly-56 threads the bilayer. The Cytoplasmic segment spans residues Tyr-57 to Ala-76. Residues Tyr-77–Trp-97 form a helical membrane-spanning segment. Over Glu-98 to Thr-100 the chain is Periplasmic. Residues Phe-101 to Leu-121 form a helical membrane-spanning segment. Over Pro-122–Tyr-128 the chain is Cytoplasmic.

It belongs to the ArnF family. As to quaternary structure, heterodimer of ArnE and ArnF.

Its subcellular location is the cell inner membrane. Its pathway is bacterial outer membrane biogenesis; lipopolysaccharide biosynthesis. Functionally, translocates 4-amino-4-deoxy-L-arabinose-phosphoundecaprenol (alpha-L-Ara4N-phosphoundecaprenol) from the cytoplasmic to the periplasmic side of the inner membrane. This Escherichia fergusonii (strain ATCC 35469 / DSM 13698 / CCUG 18766 / IAM 14443 / JCM 21226 / LMG 7866 / NBRC 102419 / NCTC 12128 / CDC 0568-73) protein is Probable 4-amino-4-deoxy-L-arabinose-phosphoundecaprenol flippase subunit ArnF.